Here is a 160-residue protein sequence, read N- to C-terminus: Cytochrome b6-f complex subunit 4 (160 aa).

The next 3 helical transmembrane spans lie at 36–56 (LLYM…GLSV), 95–115 (LLGV…PFIE), and 131–151 (ILFL…TFPI).

The protein belongs to the cytochrome b family. PetD subfamily. As to quaternary structure, the 4 large subunits of the cytochrome b6-f complex are cytochrome b6, subunit IV (17 kDa polypeptide, petD), cytochrome f and the Rieske protein, while the 4 small subunits are petG, petL, petM and petN. The complex functions as a dimer. Post-translationally, the N-terminus is blocked.

The protein localises to the plastid. It is found in the chloroplast thylakoid membrane. Component of the cytochrome b6-f complex, which mediates electron transfer between photosystem II (PSII) and photosystem I (PSI), cyclic electron flow around PSI, and state transitions. The protein is Cytochrome b6-f complex subunit 4 of Chlamydomonas reinhardtii (Chlamydomonas smithii).